A 419-amino-acid chain; its full sequence is Phospho-N-acetylmuramoyl-pentapeptide-transferase (419 aa).

10 helical membrane passes run Tyr-22 to Gly-42, Thr-72 to Ala-92, Leu-94 to Phe-114, Ile-135 to Val-155, Ala-210 to Ala-230, Gly-238 to Ser-258, Phe-266 to Ile-286, Phe-303 to Ile-323, Leu-327 to Val-347, and Lys-396 to Leu-416.

It belongs to the glycosyltransferase 4 family. MraY subfamily. Mg(2+) serves as cofactor.

The protein localises to the cell inner membrane. The catalysed reaction is UDP-N-acetyl-alpha-D-muramoyl-L-alanyl-gamma-D-glutamyl-meso-2,6-diaminopimeloyl-D-alanyl-D-alanine + di-trans,octa-cis-undecaprenyl phosphate = di-trans,octa-cis-undecaprenyl diphospho-N-acetyl-alpha-D-muramoyl-L-alanyl-D-glutamyl-meso-2,6-diaminopimeloyl-D-alanyl-D-alanine + UMP. The protein operates within cell wall biogenesis; peptidoglycan biosynthesis. In terms of biological role, catalyzes the initial step of the lipid cycle reactions in the biosynthesis of the cell wall peptidoglycan: transfers peptidoglycan precursor phospho-MurNAc-pentapeptide from UDP-MurNAc-pentapeptide onto the lipid carrier undecaprenyl phosphate, yielding undecaprenyl-pyrophosphoryl-MurNAc-pentapeptide, known as lipid I. This is Phospho-N-acetylmuramoyl-pentapeptide-transferase from Parabacteroides distasonis (strain ATCC 8503 / DSM 20701 / CIP 104284 / JCM 5825 / NCTC 11152).